The sequence spans 426 residues: Glutamate-1-semialdehyde 2,1-aminomutase (426 aa).

An N6-(pyridoxal phosphate)lysine modification is found at lysine 265.

Belongs to the class-III pyridoxal-phosphate-dependent aminotransferase family. HemL subfamily. As to quaternary structure, homodimer. It depends on pyridoxal 5'-phosphate as a cofactor.

It is found in the cytoplasm. It catalyses the reaction (S)-4-amino-5-oxopentanoate = 5-aminolevulinate. It participates in porphyrin-containing compound metabolism; protoporphyrin-IX biosynthesis; 5-aminolevulinate from L-glutamyl-tRNA(Glu): step 2/2. The polypeptide is Glutamate-1-semialdehyde 2,1-aminomutase (Pseudoalteromonas translucida (strain TAC 125)).